Here is a 415-residue protein sequence, read N- to C-terminus: Multidrug resistance protein MdtA (415 aa).

The first 21 residues, 1–21 (MKGSYKSRWVIVIVVVIAAIA), serve as a signal peptide directing secretion. Disordered stretches follow at residues 32–60 (SRSA…GPLA) and 392–415 (EAQS…GARS). The segment covering 399–415 (PEEKATSREYAKKGARS) has biased composition (basic and acidic residues).

It belongs to the membrane fusion protein (MFP) (TC 8.A.1) family. In terms of assembly, part of a tripartite efflux system composed of MdtA, MdtB and MdtC.

Its subcellular location is the cell inner membrane. Its function is as follows. The MdtABC tripartite complex confers resistance against novobiocin and deoxycholate. The protein is Multidrug resistance protein MdtA of Escherichia coli (strain 55989 / EAEC).